The primary structure comprises 193 residues: DNA damage-inducible transcript 4-like protein (193 aa).

The protein belongs to the DDIT4 family.

It localises to the cytoplasm. Functionally, inhibits cell growth by regulating the TOR signaling pathway upstream of the TSC1-TSC2 complex and downstream of AKT1. This Bos taurus (Bovine) protein is DNA damage-inducible transcript 4-like protein (DDIT4L).